We begin with the raw amino-acid sequence, 86 residues long: Small ribosomal subunit protein bS20 (86 aa).

It belongs to the bacterial ribosomal protein bS20 family.

Functionally, binds directly to 16S ribosomal RNA. The chain is Small ribosomal subunit protein bS20 from Paenarthrobacter aurescens (strain TC1).